The sequence spans 459 residues: Putrescine aminotransferase (459 aa).

Pyridoxal 5'-phosphate is bound by residues 150 to 151 and Gln274; that span reads GT. Lys300 carries the N6-(pyridoxal phosphate)lysine modification. Pyridoxal 5'-phosphate is bound at residue Thr332.

The protein belongs to the class-III pyridoxal-phosphate-dependent aminotransferase family. Putrescine aminotransferase subfamily. Pyridoxal 5'-phosphate is required as a cofactor.

It catalyses the reaction an alkane-alpha,omega-diamine + 2-oxoglutarate = an omega-aminoaldehyde + L-glutamate. The catalysed reaction is putrescine + 2-oxoglutarate = 1-pyrroline + L-glutamate + H2O. It carries out the reaction cadaverine + 2-oxoglutarate = 5-aminopentanal + L-glutamate. The protein operates within amine and polyamine degradation; putrescine degradation; 4-aminobutanal from putrescine (transaminase route): step 1/1. Its function is as follows. Catalyzes the aminotransferase reaction from putrescine to 2-oxoglutarate, leading to glutamate and 4-aminobutanal, which spontaneously cyclizes to form 1-pyrroline. This is the first step in one of two pathways for putrescine degradation, where putrescine is converted into 4-aminobutanoate (gamma-aminobutyrate or GABA) via 4-aminobutanal. Also functions as a cadaverine transaminase in a a L-lysine degradation pathway to succinate that proceeds via cadaverine, glutarate and L-2-hydroxyglutarate. In Escherichia coli (strain SMS-3-5 / SECEC), this protein is Putrescine aminotransferase.